A 469-amino-acid polypeptide reads, in one-letter code: MKNFSEWFHNILEEAELMDARYPIKGMSVWLPRGFQIRKYALNALQELLDKDHEEVLFPMLIPQSELAKEAIHVKGFEEEVYWVTKGGKRDLNEHLALRPTSETSIYPMFSLWVRSHMDLPIKVYQTVNTFRYETKHTRPLIRVREITTFNETHTAHATEEEAEKEVMEGIEIYKTFFDELGIPYSISKRPEWDKFPGSKYTMAFDMIMPDGKTLQIATVHNLGTTFAHTFDIQFENEDGTHDYVHQVCYGLSDRVIASLIAAHGDEKGLSLPPVVAPEQVIIIPIIFKENQDVVLNFTDNLEKLLKNNGIRVKQDKRELRPGKKYYEWEKRGVPLRIEVGPRDIENNTIVINRRDTGDKEFVDYDENTIVDVVKDRLDSITHDMKEASNKFQEEKTFAIEKPEQIKKTINKKGGIITCSWCGETDCGKDMEEKFDIDVLGTQESDLENKTCINCGKDASYKVLISKTY.

It belongs to the class-II aminoacyl-tRNA synthetase family. ProS type 3 subfamily. As to quaternary structure, homodimer.

The protein localises to the cytoplasm. It catalyses the reaction tRNA(Pro) + L-proline + ATP = L-prolyl-tRNA(Pro) + AMP + diphosphate. In terms of biological role, catalyzes the attachment of proline to tRNA(Pro) in a two-step reaction: proline is first activated by ATP to form Pro-AMP and then transferred to the acceptor end of tRNA(Pro). This chain is Proline--tRNA ligase, found in Methanosphaera stadtmanae (strain ATCC 43021 / DSM 3091 / JCM 11832 / MCB-3).